The chain runs to 1032 residues: Argonaute protein hrde-1 (1032 aa).

Disordered regions lie at residues 1–51 and 298–375; these read MADL…PIGR and KLSE…YSPS. The tract at residues 1–551 is required to recruit the small-RNA amplification machinery to gene targets and promote gene silencing; sequence MADLLDKIMG…IQMTAKLLPP (551 aa). The span at 18 to 33 shows a compositional bias: basic and acidic residues; sequence PKRDNRMNQDKDEPTS. Residues 303-313 show a composition bias toward gly residues; that stretch reads KGGGGGRGGYG. 2 stretches are compositionally biased toward basic and acidic residues: residues 315 to 335 and 343 to 364; these read SDSR…RDFR and GNDR…RRDS. Residues 376-481 form the PAZ domain; that stretch reads DAAELEHAFG…FPMELLRIAP (106 aa). The Piwi domain occupies 650–977; that stretch reads DILVGIAREK…LAKRGRNNYK (328 aa).

It belongs to the argonaute family. WAGO subfamily. Expressed in the nuclei of male and female germ cells.

It localises to the cytoplasm. It is found in the cytoplasmic ribonucleoprotein granule. The protein resides in the nucleus. In terms of biological role, argonaute protein which is involved in the endogenous small interfering RNA (endo-siRNA) pathway and is required for RNA-mediated gene silencing (RNAi) in the germline. Interacts with secondary 22G-RNAs in an hrde-2-dependent manner; 22G-RNAs are RNA-dependent RNA polymerase-derived endo-siRNAs, typically 22 nucleotides in length with a 5'-guanosine residue. Plays a key role in transgenerational epigenetic inheritance and germline immortality. May be involved in transgenerational gene silencing both by inducing subnuclear-co-localization of target genes into heterochromatin and by activation of small RNA amplification in the nuage. The chain is Argonaute protein hrde-1 from Caenorhabditis elegans.